Reading from the N-terminus, the 327-residue chain is Zinc transport protein ZntB (327 aa).

Residues 1–273 are Cytoplasmic-facing; sequence MEAIKGSDVN…ARRTYTMSLM (273 aa). A helical transmembrane segment spans residues 274-294; sequence AMVFLPSTFLTGLFGVNLGGI. Topologically, residues 295 to 300 are periplasmic; it reads PGGGWR. A helical transmembrane segment spans residues 301 to 321; it reads FGFSLFCILLVVLIGGVTLWL. The Cytoplasmic portion of the chain corresponds to 322 to 327; it reads HRSKWL.

The protein belongs to the CorA metal ion transporter (MIT) (TC 1.A.35) family.

It localises to the cell inner membrane. The enzyme catalyses Zn(2+)(out) + H(+)(out) = Zn(2+)(in) + H(+)(in). Its function is as follows. Zinc transporter. Acts as a Zn(2+):proton symporter, which likely mediates zinc ion uptake. In Salmonella enteritidis PT4 (strain P125109), this protein is Zinc transport protein ZntB.